A 327-amino-acid polypeptide reads, in one-letter code: Ribosomal RNA small subunit methyltransferase H (327 aa).

S-adenosyl-L-methionine-binding positions include 37 to 39, Asp-55, Phe-82, Asp-99, and Gln-106; that span reads GGY. The segment at 303–327 is disordered; that stretch reads IATRTDAPAQPVAPETLGLPQLEGF.

It belongs to the methyltransferase superfamily. RsmH family.

It is found in the cytoplasm. The enzyme catalyses cytidine(1402) in 16S rRNA + S-adenosyl-L-methionine = N(4)-methylcytidine(1402) in 16S rRNA + S-adenosyl-L-homocysteine + H(+). Functionally, specifically methylates the N4 position of cytidine in position 1402 (C1402) of 16S rRNA. The chain is Ribosomal RNA small subunit methyltransferase H from Jannaschia sp. (strain CCS1).